Consider the following 189-residue polypeptide: HTH-type transcriptional repressor AcnR (189 aa).

The HTH tetR-type domain maps to 10–70 (AERKVEILSG…EVAHEDMRKM (61 aa)). A DNA-binding region (H-T-H motif) is located at residues 33–52 (TVARLEETIGKSRGAIFHHY). Residues 79–80 (LI), R130, and Q134 each bind citrate. Residue E181 participates in Mg(2+) binding. Residue R185 participates in citrate binding.

Homodimer.

Functionally, acnR negatively controls the expression of the aconitase gene acn. In Corynebacterium jeikeium (strain K411), this protein is HTH-type transcriptional repressor AcnR.